Here is a 204-residue protein sequence, read N- to C-terminus: Imidazole glycerol phosphate synthase subunit HisH (204 aa).

In terms of domain architecture, Glutamine amidotransferase type-1 spans M1–I204. The active-site Nucleophile is the C80. Residues H186 and E188 contribute to the active site.

In terms of assembly, heterodimer of HisH and HisF.

It is found in the cytoplasm. The catalysed reaction is 5-[(5-phospho-1-deoxy-D-ribulos-1-ylimino)methylamino]-1-(5-phospho-beta-D-ribosyl)imidazole-4-carboxamide + L-glutamine = D-erythro-1-(imidazol-4-yl)glycerol 3-phosphate + 5-amino-1-(5-phospho-beta-D-ribosyl)imidazole-4-carboxamide + L-glutamate + H(+). It catalyses the reaction L-glutamine + H2O = L-glutamate + NH4(+). It functions in the pathway amino-acid biosynthesis; L-histidine biosynthesis; L-histidine from 5-phospho-alpha-D-ribose 1-diphosphate: step 5/9. Functionally, IGPS catalyzes the conversion of PRFAR and glutamine to IGP, AICAR and glutamate. The HisH subunit catalyzes the hydrolysis of glutamine to glutamate and ammonia as part of the synthesis of IGP and AICAR. The resulting ammonia molecule is channeled to the active site of HisF. In Bdellovibrio bacteriovorus (strain ATCC 15356 / DSM 50701 / NCIMB 9529 / HD100), this protein is Imidazole glycerol phosphate synthase subunit HisH.